Consider the following 550-residue polypeptide: Putative golgin subfamily A member 6-like protein 19 (550 aa).

The span at M1–P11 shows a compositional bias: pro residues. The segment at M1–G77 is disordered. A compositionally biased stretch (polar residues) spans N51–G62. Residues S157–R405 are a coiled coil. The span at K467–G480 shows a compositional bias: basic and acidic residues. Residues K467 to A529 are disordered. Low complexity-rich tracts occupy residues A484–A499 and G517–A529.

Belongs to the GOLGA6 family.

The polypeptide is Putative golgin subfamily A member 6-like protein 19 (GOLGA6L19) (Homo sapiens (Human)).